The following is a 147-amino-acid chain: Bis(5'-nucleosyl)-tetraphosphatase [asymmetrical] (147 aa).

At Ala-2 the chain carries N-acetylalanine. One can recognise a Nudix hydrolase domain in the interval 2 to 139 (ALRACGLIIF…EMKATLQEGH (138 aa)). A Nudix box motif is present at residues 43–64 (GHVDPGENDLETALRETREETG).

The protein belongs to the Nudix hydrolase family. The cofactor is a divalent metal cation.

It catalyses the reaction P(1),P(4)-bis(5'-guanosyl) tetraphosphate + H2O = GMP + GTP + 2 H(+). It carries out the reaction a 5'-end CoA-ribonucleoside in mRNA + H2O = a 5'-end phospho-adenosine-phospho-ribonucleoside in mRNA + (R)-4'-phosphopantetheine + 2 H(+). The catalysed reaction is a 5'-end FAD-phospho-ribonucleoside in mRNA + H2O = a 5'-end phospho-adenosine-phospho-ribonucleoside in mRNA + FMN + 2 H(+). In terms of biological role, catalyzes the asymmetric hydrolysis of diadenosine 5',5'''-P1,P4-tetraphosphate (Ap4A) to yield AMP and ATP. Exhibits decapping activity towards FAD-capped RNAs and dpCoA-capped RNAs in vitro. In Mus musculus (Mouse), this protein is Bis(5'-nucleosyl)-tetraphosphatase [asymmetrical] (Nudt2).